The chain runs to 248 residues: Type II restriction enzyme XhoI (248 aa).

This sequence belongs to the XhoI type II restriction endonuclease family.

The enzyme catalyses Endonucleolytic cleavage of DNA to give specific double-stranded fragments with terminal 5'-phosphates.. Functionally, a P subtype restriction enzyme that recognizes the double-stranded sequence 5'-CTCGAG-3' and cleaves after C-1. The polypeptide is Type II restriction enzyme XhoI (Xanthomonas vasicola).